Here is a 177-residue protein sequence, read N- to C-terminus: ATP synthase subunit delta (177 aa).

It belongs to the ATPase delta chain family. In terms of assembly, F-type ATPases have 2 components, F(1) - the catalytic core - and F(0) - the membrane proton channel. F(1) has five subunits: alpha(3), beta(3), gamma(1), delta(1), epsilon(1). F(0) has three main subunits: a(1), b(2) and c(10-14). The alpha and beta chains form an alternating ring which encloses part of the gamma chain. F(1) is attached to F(0) by a central stalk formed by the gamma and epsilon chains, while a peripheral stalk is formed by the delta and b chains.

It is found in the cell inner membrane. In terms of biological role, f(1)F(0) ATP synthase produces ATP from ADP in the presence of a proton or sodium gradient. F-type ATPases consist of two structural domains, F(1) containing the extramembraneous catalytic core and F(0) containing the membrane proton channel, linked together by a central stalk and a peripheral stalk. During catalysis, ATP synthesis in the catalytic domain of F(1) is coupled via a rotary mechanism of the central stalk subunits to proton translocation. Functionally, this protein is part of the stalk that links CF(0) to CF(1). It either transmits conformational changes from CF(0) to CF(1) or is implicated in proton conduction. The chain is ATP synthase subunit delta from Aliivibrio fischeri (strain MJ11) (Vibrio fischeri).